We begin with the raw amino-acid sequence, 321 residues long: Nitrilase blr3397 (321 aa).

The CN hydrolase domain occupies 10–277 (YKAAVVQAAS…ETILYADIAL (268 aa)). Glu50 functions as the Proton acceptor in the catalytic mechanism. The Proton donor role is filled by Lys137. The active-site Nucleophile is Cys171.

This sequence belongs to the carbon-nitrogen hydrolase superfamily. Nitrilase family. As to quaternary structure, homodecamer.

The enzyme catalyses an aliphatic nitrile + 2 H2O = a carboxylate + NH4(+). Its function is as follows. Nitrilase that acts on various kinds of nitrile compounds such as aliphatic and aromatic nitriles. Has higher activity toward aliphatic nitriles compared to aromatic nitriles. Among the different substrates tested, has the highest activity toward hydrocinnamonitrile. This Bradyrhizobium diazoefficiens (strain JCM 10833 / BCRC 13528 / IAM 13628 / NBRC 14792 / USDA 110) protein is Nitrilase blr3397.